A 315-amino-acid polypeptide reads, in one-letter code: Ferrochelatase (315 aa).

His-193 and Glu-273 together coordinate Fe cation.

Belongs to the ferrochelatase family.

The protein localises to the cytoplasm. The catalysed reaction is heme b + 2 H(+) = protoporphyrin IX + Fe(2+). Its pathway is porphyrin-containing compound metabolism; protoheme biosynthesis; protoheme from protoporphyrin-IX: step 1/1. Its function is as follows. Catalyzes the ferrous insertion into protoporphyrin IX. This Wolbachia pipientis wMel protein is Ferrochelatase.